We begin with the raw amino-acid sequence, 509 residues long: Transmembrane protein 104 homolog (509 aa).

Residues Met-1 to Gly-19 are Cytoplasmic-facing. A helical membrane pass occupies residues Phe-20–Ala-40. The Extracellular portion of the chain corresponds to Arg-41–Met-45. The chain crosses the membrane as a helical span at residues Leu-46–Ile-66. Residues Glu-67–Arg-151 are Cytoplasmic-facing. Residues Val-152 to Ala-172 traverse the membrane as a helical segment. The Extracellular segment spans residues Val-173–Asn-218. 3 N-linked (GlcNAc...) asparagine glycosylation sites follow: Asn-186, Asn-202, and Asn-203. A helical membrane pass occupies residues Met-219 to Val-239. The Cytoplasmic segment spans residues Gln-240–Leu-248. The helical transmembrane segment at Thr-249–Ile-269 threads the bilayer. Residues Ser-270 to Pro-277 lie on the Extracellular side of the membrane. The chain crosses the membrane as a helical span at residues Ala-278–Cys-298. Residues His-299–Ser-320 are Cytoplasmic-facing. The chain crosses the membrane as a helical span at residues Ile-321–Phe-341. Over Glu-342–Asp-361 the chain is Extracellular. A helical membrane pass occupies residues Phe-362 to Leu-382. Residues Ser-383–Ser-411 are Cytoplasmic-facing. Residues Val-412 to Phe-432 form a helical membrane-spanning segment. Residues Thr-433 to Leu-439 are Extracellular-facing. A helical membrane pass occupies residues Val-440–Val-460. At Tyr-461–Ala-487 the chain is on the cytoplasmic side. The helical transmembrane segment at Trp-488 to Phe-508 threads the bilayer. A topological domain (extracellular) is located at residue Ser-509.

It belongs to the TMEM104 family.

The protein localises to the membrane. The protein is Transmembrane protein 104 homolog of Drosophila melanogaster (Fruit fly).